Consider the following 80-residue polypeptide: UPF0248 protein M1425_2629 (80 aa).

The protein belongs to the UPF0248 family.

This chain is UPF0248 protein M1425_2629, found in Saccharolobus islandicus (strain M.14.25 / Kamchatka #1) (Sulfolobus islandicus).